Consider the following 151-residue polypeptide: D-aminoacyl-tRNA deacylase (151 aa).

The short motif at 137 to 138 is the Gly-cisPro motif, important for rejection of L-amino acids element; it reads GP.

It belongs to the DTD family. As to quaternary structure, homodimer.

It localises to the cytoplasm. It catalyses the reaction glycyl-tRNA(Ala) + H2O = tRNA(Ala) + glycine + H(+). The catalysed reaction is a D-aminoacyl-tRNA + H2O = a tRNA + a D-alpha-amino acid + H(+). Functionally, an aminoacyl-tRNA editing enzyme that deacylates mischarged D-aminoacyl-tRNAs. Also deacylates mischarged glycyl-tRNA(Ala), protecting cells against glycine mischarging by AlaRS. Acts via tRNA-based rather than protein-based catalysis; rejects L-amino acids rather than detecting D-amino acids in the active site. By recycling D-aminoacyl-tRNA to D-amino acids and free tRNA molecules, this enzyme counteracts the toxicity associated with the formation of D-aminoacyl-tRNA entities in vivo and helps enforce protein L-homochirality. The sequence is that of D-aminoacyl-tRNA deacylase from Fusobacterium nucleatum subsp. nucleatum (strain ATCC 25586 / DSM 15643 / BCRC 10681 / CIP 101130 / JCM 8532 / KCTC 2640 / LMG 13131 / VPI 4355).